Here is an 835-residue protein sequence, read N- to C-terminus: Protein translocase subunit SecA 1 (835 aa).

ATP contacts are provided by residues Q85, G103–T107, and D492. A disordered region spans residues V788 to V807. Zn(2+)-binding residues include C819, C821, C830, and C831.

The protein belongs to the SecA family. As to quaternary structure, monomer and homodimer. Part of the essential Sec protein translocation apparatus which comprises SecA, SecYEG and auxiliary proteins SecDF. Other proteins may also be involved. Zn(2+) serves as cofactor.

The protein resides in the cell membrane. It localises to the cytoplasm. It carries out the reaction ATP + H2O + cellular proteinSide 1 = ADP + phosphate + cellular proteinSide 2.. Functionally, part of the Sec protein translocase complex. Interacts with the SecYEG preprotein conducting channel. Has a central role in coupling the hydrolysis of ATP to the transfer of proteins into and across the cell membrane, serving as an ATP-driven molecular motor driving the stepwise translocation of polypeptide chains across the membrane. This is Protein translocase subunit SecA 1 from Bacillus thuringiensis (strain Al Hakam).